Reading from the N-terminus, the 219-residue chain is MGQKVNPVGLRVGVIRDWESKWYAEKDYADLLHEDIKIREYIENRLKDASVSKIEIERAANRVNITISTAKPGMVIGKGGSEVEALRKALNELTGKRVHINIFEVKQADLDAKLVAENIARQLENRISFRRAMKQAIQRTMRAGAQGIKTQVSGRLGGADIARAEHYSEGTVPLHTLRADIDYGTAEADTTYGKLGVKIWIYRGEVLPTKGKNKKEGGN.

The region spanning 38–106 is the KH type-2 domain; the sequence is IREYIENRLK…RVHINIFEVK (69 aa).

This sequence belongs to the universal ribosomal protein uS3 family. In terms of assembly, part of the 30S ribosomal subunit. Forms a tight complex with proteins S10 and S14.

In terms of biological role, binds the lower part of the 30S subunit head. Binds mRNA in the 70S ribosome, positioning it for translation. The sequence is that of Small ribosomal subunit protein uS3 from Halalkalibacterium halodurans (strain ATCC BAA-125 / DSM 18197 / FERM 7344 / JCM 9153 / C-125) (Bacillus halodurans).